We begin with the raw amino-acid sequence, 295 residues long: 4-diphosphocytidyl-2-C-methyl-D-erythritol kinase (295 aa).

The active site involves Lys-22. 106–116 provides a ligand contact to ATP; the sequence is PAGGGFGGGSS. Residue Asp-148 is part of the active site.

This sequence belongs to the GHMP kinase family. IspE subfamily.

The catalysed reaction is 4-CDP-2-C-methyl-D-erythritol + ATP = 4-CDP-2-C-methyl-D-erythritol 2-phosphate + ADP + H(+). It functions in the pathway isoprenoid biosynthesis; isopentenyl diphosphate biosynthesis via DXP pathway; isopentenyl diphosphate from 1-deoxy-D-xylulose 5-phosphate: step 3/6. Functionally, catalyzes the phosphorylation of the position 2 hydroxy group of 4-diphosphocytidyl-2C-methyl-D-erythritol. In Xanthomonas campestris pv. campestris (strain 8004), this protein is 4-diphosphocytidyl-2-C-methyl-D-erythritol kinase.